We begin with the raw amino-acid sequence, 667 residues long: Transcription factor 4 (667 aa).

An essential for MYOD1 inhibition region spans residues 1–83; it reads MHHQQRMAAL…GTPYDHMTSR (83 aa). The short motif at 18-26 is the 9aaTAD element; it reads DLLDFSAMF. 5 disordered regions span residues 24-245, 263-321, 336-379, 466-570, and 634-667; these read AMFS…LGNS, LSYP…SQTG, HTNN…EGPL, SLLP…MANN, and KRREEEKVSSEPPPLSLAGPHPGMGDASNHMGQM. The span at 29–49 shows a compositional bias: polar residues; sequence PVSSGKNGPTSLASGHFTGSN. S66, S87, and S92 each carry phosphoserine. Polar residues-rich tracts occupy residues 107–126, 137–155, 205–216, and 266–306; these read GSYSSYGRESNLQGCHQQSL, GTLSPTKPGSQYYQYSSNN, KPATSTFPSSFF, and PSHS…TDSI. Over residues 337-348 the composition is skewed to low complexity; it reads TNNSFSSNPSTP. The span at 365 to 374 shows a compositional bias: polar residues; sequence NGGQASSSPN. S372 is subject to Phosphoserine. Residues 379-400 are leucine-zipper; the sequence is LHSLQSRIEDRLERLDDAIHVL. Composition is skewed to low complexity over residues 467 to 480 and 503 to 512; these read LLPNQVPVPQLPVQ and GQSVSSGSSE. S515 bears the Phosphoserine mark. Basic and acidic residues-rich tracts occupy residues 527 to 542 and 555 to 570; these read KSSEDKKLDDDKKDIK and PEQKAEREKERRMANN. In terms of domain architecture, bHLH spans 564 to 617; sequence ERRMANNARERLRVRDINEAFKELGRMVQLHLKSDKPQTKLLILHQAVAVILSL. The class A specific domain stretch occupies residues 619-642; that stretch reads QQVRERNLNPKAACLKRREEEKVS.

Efficient DNA binding requires dimerization with another bHLH protein. Forms homo- or heterooligomers with myogenin. Interacts with HIVEP2. Interacts with NEUROD2. Interacts with AGBL1. Interacts with BHLHA9. Expressed in adult heart, brain, placenta, skeletal muscle and to a lesser extent in the lung. In developing embryonic tissues, expression mostly occurs in the brain.

Its subcellular location is the nucleus. Functionally, transcription factor that binds to the immunoglobulin enhancer Mu-E5/KE5-motif. Involved in the initiation of neuronal differentiation. Activates transcription by binding to the E box (5'-CANNTG-3'). Binds to the E-box present in the somatostatin receptor 2 initiator element (SSTR2-INR) to activate transcription. Preferentially binds to either 5'-ACANNTGT-3' or 5'-CCANNTGG-3'. This chain is Transcription factor 4 (TCF4), found in Homo sapiens (Human).